Here is a 330-residue protein sequence, read N- to C-terminus: Aspartate--ammonia ligase (330 aa).

This sequence belongs to the class-II aminoacyl-tRNA synthetase family. AsnA subfamily.

Its subcellular location is the cytoplasm. The catalysed reaction is L-aspartate + NH4(+) + ATP = L-asparagine + AMP + diphosphate + H(+). The protein operates within amino-acid biosynthesis; L-asparagine biosynthesis; L-asparagine from L-aspartate (ammonia route): step 1/1. In Escherichia fergusonii (strain ATCC 35469 / DSM 13698 / CCUG 18766 / IAM 14443 / JCM 21226 / LMG 7866 / NBRC 102419 / NCTC 12128 / CDC 0568-73), this protein is Aspartate--ammonia ligase.